Here is a 407-residue protein sequence, read N- to C-terminus: MELLEEDLTCPICCSLFDDPRVLPCSHNFCKKCLEGLLEGNVRNSLWRPSPFKCPTCRKETSATGVNSLQVNYSLKGIVEKYNKIKISPKMPVCKEHLGQPLNIFCVTDMQLICGVCATRGSHTKHVFSSIEDAYTQERDAFEFLFQSFETWRRGDALSRLDTLETNKRKSLQLLTKDSDKVKEFFEKLQHTLDQKKNEILSDFETMKLAVMQTYDPEINKLNSILQEQRMAFNIAEAFKDVSEPIIFLQQMQEFREKIKVIKETPLPPSNLPTSPLMKNFDTSQWEDIKLVDVDKLSLPQDTGVLTSRSPWHPCLLLMAVVLLGLLVFFGPTVFLEWSPLEELATWKDCLSSFNSYLTKSADFVEQSVFYWEQMTDGLFVFSERVKNVSLVALNNVAEFVCKYKLL.

Residues 10–58 (CPICCSLFDDPRVLPCSHNFCKKCLEGLLEGNVRNSLWRPSPFKCPTCR) form an RING-type zinc finger. The segment at 89–131 (PKMPVCKEHLGQPLNIFCVTDMQLICGVCATRGSHTKHVFSSI) adopts a B box-type zinc-finger fold. Zn(2+) is bound by residues C94, H97, C117, and H123. Residues 172 to 200 (LQLLTKDSDKVKEFFEKLQHTLDQKKNEI) are a coiled coil. Residues 316–336 (LLLMAVVLLGLLVFFGPTVFL) traverse the membrane as a helical segment.

In terms of assembly, interacts (via C-terminal domain) with VCP. Interacts with AKT1; the interaction ubiquitinates AKT1 and leads to its proteasomal degradation. Interacts with MDM2; the interaction ubiquitinates AKT1 and leads to its proteasomal degradation. Interacts with p62/SQSTM1. Interacts with TRAF6. Interacts with IKBKG/NEMO. Auto-ubiquitinated; requires the RING-type zinc finger. Auto-polyubiquitination leads to proteasomal degradation.

The protein resides in the endoplasmic reticulum membrane. The catalysed reaction is S-ubiquitinyl-[E2 ubiquitin-conjugating enzyme]-L-cysteine + [acceptor protein]-L-lysine = [E2 ubiquitin-conjugating enzyme]-L-cysteine + N(6)-ubiquitinyl-[acceptor protein]-L-lysine.. Its pathway is protein modification; protein ubiquitination. Endoplasmic reticulum (ER) membrane anchored E3 ligase involved in the retrotranslocation and turnover of membrane and secretory proteins from the ER through a set of processes named ER-associated degradation (ERAD). This process acts on misfolded proteins as well as in the regulated degradation of correctly folded proteins. Enhances ionizing radiation-induced p53/TP53 stability and apoptosis via ubiquitinating MDM2 and AKT1 and decreasing AKT1 kinase activity through MDM2 and AKT1 proteasomal degradation. Regulates ER stress-induced autophagy, and may act as a tumor suppressor. Also plays a role in innate immune response by stimulating NF-kappa-B activity in the TLR2 signaling pathway. Ubiquitinates TRAF6 via the 'Lys-29'-linked polyubiquitination chain resulting in NF-kappa-B activation. Participates as well in T-cell receptor-mediated NF-kappa-B activation. In the presence of TNF, modulates the IKK complex by regulating IKBKG/NEMO ubiquitination leading to the repression of NF-kappa-B. This is E3 ubiquitin-protein ligase TRIM13 (Trim13) from Rattus norvegicus (Rat).